An 857-amino-acid chain; its full sequence is MALPSSSLSSQIHTGATTQCIPHFHGSLNAGTSAGKRRSLYLRWGKDNQAKKFGPSKIVACAGQDPFSVPTLVKREFPPGFWKDHVIESLMPSYKVAPSDEKRIETLITEIKNMFRSMGYGETNPSAYDTAWVARIPAVDGSEKPQFPETLEWILQNQLKDGSWGEEFYFLAYDRILATLACIITLTIWQTGDTQVQKGIEFFKTQAGKIEEEADSHRPSGFEIVFPAMLKEAKALGLDLPYELPFIQQIIEKREAKLQRLPPDLLYALPTTLLYSLEGLQEIVDWEKIMKLQSKDGSFLSSPASTAAVFMRTGNKKCLEFLNFVLKKFGNHVPCHYPLDLFERLWAVDTVERLGIDHHFKEEIKDALDYVYSHWDERGIGWARENPVPDIDDTAMGLRILRLHGYNVSSDVLKTFRDENGEFFCFLGQTQRGVTDMLNVNRCSHVAFPGETIMEEAKLCTERYLRNALEDTGAFDKWALKKNIRGEVEYALKYPWHRSMPRLEARSYIENYGPNDVWLGKTMYMMPNISNEKYLELAKLDFNRVQFFHRQELQDIRRWWNSSGFSQLGFTRERVAEIYFSPASFLFEPEFATCRAVYTKTSNFTVILDDLYDAHGTLDNLKLFSESVKRWDLSLVDQMPQDMKICFKGFYNTFNEIAEEGRKRQGRDVLSYIQKVWEVQLEAYTKEAEWSAVRYVPSYDEYIGNASVSIALGTVVLISALFTGEILTDDILSKIGRDSRFLYLMGLTGRLVNDTKTYQAERGQGEVASAVQCYMKDHPEISEEEALKHVYTIMDNALDELNREFVNNRDVPDTCRRLVFETARIMQLFYMDGDGLTLSHNMEIKEHVKNCLFQPVA.

The transit peptide at 1-33 directs the protein to the chloroplast; that stretch reads MALPSSSLSSQIHTGATTQCIPHFHGSLNAGTS. Residue K257 participates in substrate binding. 2 residues coordinate Mg(2+): D390 and D392. The DXDD motif motif lies at 390-393; sequence DIDD. K477 contacts substrate. Residues D609, D613, N753, T757, and E761 each contribute to the Mg(2+) site. The DDXXD motif signature appears at 609-613; that stretch reads DDLYD.

This sequence belongs to the terpene synthase family. Tpsd subfamily. Mg(2+) is required as a cofactor.

It is found in the plastid. Its subcellular location is the chloroplast. It carries out the reaction (2E,6E,10E)-geranylgeranyl diphosphate = (+)-copalyl diphosphate. The enzyme catalyses (+)-copalyl diphosphate = abieta-7,13-diene + diphosphate. The catalysed reaction is (+)-copalyl diphosphate = abieta-8(14),12-diene + diphosphate. It catalyses the reaction (+)-copalyl diphosphate = neoabietadiene + diphosphate. It functions in the pathway terpene metabolism; oleoresin biosynthesis. Functionally, involved in defensive oleoresin formation in conifers in response to insect attack or other injury. Involved in diterpene (C20) olefins biosynthesis. Bifunctional enzyme that catalyzes two sequential cyclizations of geranylgeranyl diphosphate (GGPP) to levopimaradiene. Levopimaradiene is the major products of the enzyme with abietadiene and neoabietadiene. No activity with farnesyl diphosphate (FPP) as substrate. The protein is Bifunctional levopimaradiene synthase, chloroplastic of Pinus banksiana (Jack pine).